The following is a 230-amino-acid chain: Thymidylate kinase (230 aa).

20–27 provides a ligand contact to ATP; it reads GGEGAGKS.

Belongs to the thymidylate kinase family.

The enzyme catalyses dTMP + ATP = dTDP + ADP. In terms of biological role, phosphorylation of dTMP to form dTDP in both de novo and salvage pathways of dTTP synthesis. In Rhodopseudomonas palustris (strain BisB18), this protein is Thymidylate kinase.